Reading from the N-terminus, the 345-residue chain is tRNA-specific 2-thiouridylase MnmA 1 (345 aa).

ATP-binding positions include 9–16 (GMSGGIDS) and leucine 35. Residue cysteine 96 is the Nucleophile of the active site. Residues cysteine 96 and cysteine 191 are joined by a disulfide bond. Glycine 120 provides a ligand contact to ATP. Positions 138 to 140 (KDQ) are interaction with tRNA. Residue cysteine 191 is the Cysteine persulfide intermediate of the active site. The interaction with tRNA stretch occupies residues 293–294 (RY).

It belongs to the MnmA/TRMU family.

Its subcellular location is the cytoplasm. The catalysed reaction is S-sulfanyl-L-cysteinyl-[protein] + uridine(34) in tRNA + AH2 + ATP = 2-thiouridine(34) in tRNA + L-cysteinyl-[protein] + A + AMP + diphosphate + H(+). In terms of biological role, catalyzes the 2-thiolation of uridine at the wobble position (U34) of tRNA, leading to the formation of s(2)U34. This Aliarcobacter butzleri (strain RM4018) (Arcobacter butzleri) protein is tRNA-specific 2-thiouridylase MnmA 1.